A 496-amino-acid polypeptide reads, in one-letter code: Cytochrome P450 71B12 (496 aa).

A helical membrane pass occupies residues 2–22; sequence SLWYIIVAFVFFSSMIIVRII. Cys-436 is a heme binding site.

This sequence belongs to the cytochrome P450 family. Heme is required as a cofactor.

It is found in the membrane. The sequence is that of Cytochrome P450 71B12 (CYP71B12) from Arabidopsis thaliana (Mouse-ear cress).